Here is a 152-residue protein sequence, read N- to C-terminus: Small ribosomal subunit protein uS19z (152 aa).

Belongs to the universal ribosomal protein uS19 family.

The protein resides in the cytoplasm. The polypeptide is Small ribosomal subunit protein uS19z (RPS15B) (Arabidopsis thaliana (Mouse-ear cress)).